The primary structure comprises 254 residues: 4-hydroxy-tetrahydrodipicolinate reductase (254 aa).

Residue 7 to 12 (GASGRI) participates in NAD(+) binding. Arg35 contributes to the NADP(+) binding site. NAD(+)-binding positions include 91–93 (GTT) and 115–118 (AHNM). The active-site Proton donor/acceptor is the His147. His148 contributes to the (S)-2,3,4,5-tetrahydrodipicolinate binding site. Catalysis depends on Lys151, which acts as the Proton donor. (S)-2,3,4,5-tetrahydrodipicolinate is bound at residue 157–158 (GT).

It belongs to the DapB family.

It localises to the cytoplasm. It carries out the reaction (S)-2,3,4,5-tetrahydrodipicolinate + NAD(+) + H2O = (2S,4S)-4-hydroxy-2,3,4,5-tetrahydrodipicolinate + NADH + H(+). The catalysed reaction is (S)-2,3,4,5-tetrahydrodipicolinate + NADP(+) + H2O = (2S,4S)-4-hydroxy-2,3,4,5-tetrahydrodipicolinate + NADPH + H(+). It functions in the pathway amino-acid biosynthesis; L-lysine biosynthesis via DAP pathway; (S)-tetrahydrodipicolinate from L-aspartate: step 4/4. In terms of biological role, catalyzes the conversion of 4-hydroxy-tetrahydrodipicolinate (HTPA) to tetrahydrodipicolinate. The sequence is that of 4-hydroxy-tetrahydrodipicolinate reductase from Helicobacter pylori (strain P12).